Reading from the N-terminus, the 176-residue chain is Nucleoside triphosphate/diphosphate phosphatase (176 aa).

Catalysis depends on arginine 23, which acts as the Proton donor. Positions 87, 103, 105, 107, 120, and 123 each coordinate Mg(2+).

Belongs to the Ntdp family. Mg(2+) is required as a cofactor.

It catalyses the reaction a ribonucleoside 5'-triphosphate + H2O = a ribonucleoside 5'-diphosphate + phosphate + H(+). The enzyme catalyses a ribonucleoside 5'-diphosphate + H2O = a ribonucleoside 5'-phosphate + phosphate + H(+). Its function is as follows. Has nucleoside phosphatase activity towards nucleoside triphosphates and nucleoside diphosphates. This chain is Nucleoside triphosphate/diphosphate phosphatase, found in Bacillus velezensis (strain DSM 23117 / BGSC 10A6 / LMG 26770 / FZB42) (Bacillus amyloliquefaciens subsp. plantarum).